We begin with the raw amino-acid sequence, 441 residues long: Ribosomal protein uS12 methylthiotransferase RimO (441 aa).

The region spanning 7 to 117 (PKISFVSLGC…VLDAVHRAKP (111 aa)) is the MTTase N-terminal domain. Positions 16, 52, 81, 148, 152, and 155 each coordinate [4Fe-4S] cluster. One can recognise a Radical SAM core domain in the interval 134–371 (LTPRHYAYLK…MARQQAISAR (238 aa)). Residues 374–440 (KRKVGTRQQI…AYDLHGTVAG (67 aa)) enclose the TRAM domain.

The protein belongs to the methylthiotransferase family. RimO subfamily. [4Fe-4S] cluster is required as a cofactor.

It localises to the cytoplasm. It carries out the reaction L-aspartate(89)-[ribosomal protein uS12]-hydrogen + (sulfur carrier)-SH + AH2 + 2 S-adenosyl-L-methionine = 3-methylsulfanyl-L-aspartate(89)-[ribosomal protein uS12]-hydrogen + (sulfur carrier)-H + 5'-deoxyadenosine + L-methionine + A + S-adenosyl-L-homocysteine + 2 H(+). Its function is as follows. Catalyzes the methylthiolation of an aspartic acid residue of ribosomal protein uS12. This chain is Ribosomal protein uS12 methylthiotransferase RimO, found in Rhodopseudomonas palustris (strain HaA2).